A 1556-amino-acid chain; its full sequence is Lysine-specific demethylase 5C (1556 aa).

The 42-residue stretch at 14–55 folds into the JmjN domain; it reads CPVFEPSWAEFRDPLGYIAKIRPIAEKSGICKIRPPADWQPP. The ARID domain occupies 79-169; that stretch reads TRVKLNYLDQ…IVYPYEMYQS (91 aa). Residues 197–207 are compositionally biased toward polar residues; sequence LRQSVQPSKFN. Residues 197–227 are disordered; it reads LRQSVQPSKFNSYGRRAKRLQPDPEPTEEDI. Glycyl lysine isopeptide (Lys-Gly) (interchain with G-Cter in SUMO2) cross-links involve residues lysine 205, lysine 229, lysine 244, and lysine 274. The disordered stretch occupies residues 257–303; that stretch reads LRKKDKEGPECPPTVVVKEESGGDVKVESTSPKTFLESKEELSHSPE. Positions 273-283 are enriched in basic and acidic residues; that stretch reads VKEESGGDVKV. Serine 287 is modified (phosphoserine). Residue lysine 295 forms a Glycyl lysine isopeptide (Lys-Gly) (interchain with G-Cter in SUMO2) linkage. Phosphoserine is present on residues serine 301 and serine 317. The PHD-type 1 zinc-finger motif lies at 324 to 374; it reads SYVCRMCSRGDEDDKLLLCDGCDDNYHIFCLLPPLPEIPKGVWRCPKCVMA. Residues 468 to 634 enclose the JmjC domain; it reads EYATSGWNLN…AGRQCIEHYR (167 aa). The Fe cation site is built by histidine 514, aspartate 517, and histidine 602. Phosphoserine is present on residues serine 893 and serine 897. A Glycyl lysine isopeptide (Lys-Gly) (interchain with G-Cter in SUMO2) cross-link involves residue lysine 1127. The PHD-type 2 zinc finger occupies 1185–1250; sequence TSVCVCGQVP…KFLCPLCMRS (66 aa). Disordered stretches follow at residues 1315-1362 and 1441-1556; these read LQAE…SPEK and ERHG…QQQL. The segment covering 1335-1345 has biased composition (basic and acidic residues); sequence PLREGSGKDMP. Serine 1359 is subject to Phosphoserine. The segment covering 1445–1460 has biased composition (basic residues); the sequence is SRARGRALERRRRRKV. The segment covering 1461–1478 has biased composition (basic and acidic residues); sequence DRGGEGDDPAREELEPKR. Positions 1485-1500 are enriched in acidic residues; it reads EAEEAQEEEELEEETG. Composition is skewed to polar residues over residues 1513-1522 and 1530-1540; these read SPSTQENQNG and SGPSAPFSTLS. Over residues 1541–1556 the composition is skewed to low complexity; sequence PQLHVPCPQQPPQQQL.

Belongs to the JARID1 histone demethylase family. In terms of assembly, part of two distinct complexes, one containing E2F6, and the other containing REST. Interacts with ZMYND8. Requires Fe(2+) as cofactor.

It localises to the nucleus. It carries out the reaction N(6),N(6),N(6)-trimethyl-L-lysyl(4)-[histone H3] + 3 2-oxoglutarate + 3 O2 = L-lysyl(4)-[histone H3] + 3 formaldehyde + 3 succinate + 3 CO2. Histone demethylase that specifically demethylates 'Lys-4' of histone H3, thereby playing a central role in histone code. Does not demethylate histone H3 'Lys-9', H3 'Lys-27', H3 'Lys-36', H3 'Lys-79' or H4 'Lys-20'. Demethylates trimethylated and dimethylated but not monomethylated H3 'Lys-4'. Participates in transcriptional repression of neuronal genes by recruiting histone deacetylases and REST at neuron-restrictive silencer elements. Represses the CLOCK-BMAL1 heterodimer-mediated transcriptional activation of the core clock component PER2. The sequence is that of Lysine-specific demethylase 5C (KDM5C) from Canis lupus familiaris (Dog).